A 493-amino-acid chain; its full sequence is Galactose-1-phosphate uridylyltransferase (493 aa).

The protein belongs to the galactose-1-phosphate uridylyltransferase type 2 family.

The protein localises to the cytoplasm. It catalyses the reaction alpha-D-galactose 1-phosphate + UDP-alpha-D-glucose = alpha-D-glucose 1-phosphate + UDP-alpha-D-galactose. The protein operates within carbohydrate metabolism; galactose metabolism. This is Galactose-1-phosphate uridylyltransferase from Streptococcus thermophilus (strain CNRZ 1066).